A 665-amino-acid chain; its full sequence is MTSSCSLSRPQHLFFFFFLFVPFLSLGQQISVDINSAIWEFPSNPLCLSQQSNFAKSSQFSKNLDSLVSSIPSLKSNTYNFYSLSVGSISDQERVEAIGICNRVVNRVDCLNCIAQAAVNLTTMYCPQHRGAYVRATKCMFRYSDKPIFGKLETSPVLEAPNPSNATGDRNEFIRLQSELLNRLRSMAASGGSKRKYAQGTDPGSPPYTTFFGAVQCTPDLSEKDCNDCLSYGFSNATKGRVGIRWFCPSCNFQIESDLRFFLLDSEYEPDPKPGNDKVKIIIATVCSVIGFAIIAVFLYFFMTRNRRTAKQRHEGKDLEELMIKDAQLLQLDFDTIRLATNDFSRDNQLGEGGFGAVYKGVLDYGEEIAVKRLSMKSGQGDNEFINEVSLVAKLQHRNLVRLLGFCLQGEERILIYEFFKNTSLDHYIFDSNRRMILDWETRYRIISGVARGLLYLHEDSRFKIVHRDMKASNVLLDDAMNPKIADFGMAKLFDTDQTSQTRFTSKVAGTYGYMAPEYAMSGEFSVKTDVFSFGVLVLEIIKGKKNNWSPEEDSSLFLLSYVWKSWREGEVLNIVDPSLVETIGVSDEIMKCIHIGLLCVQENAESRPTMASVVVMLNANSFTLPRPSQPAFYSGDGESLSRDKNQINHIASLNDVTITEFDAR.

The first 27 residues, 1–27 (MTSSCSLSRPQHLFFFFFLFVPFLSLG), serve as a signal peptide directing secretion. Residues 28 to 280 (QQISVDINSA…DPKPGNDKVK (253 aa)) are Extracellular-facing. 2 consecutive Gnk2-homologous domains span residues 42–148 (PSNP…DKPI) and 154–260 (TSPV…SDLR). N-linked (GlcNAc...) asparagine glycans are attached at residues asparagine 120, asparagine 165, and asparagine 236. Residues 281-301 (IIIATVCSVIGFAIIAVFLYF) traverse the membrane as a helical segment. At 302–665 (FMTRNRRTAK…DVTITEFDAR (364 aa)) the chain is on the cytoplasmic side. The 281-residue stretch at 344 to 624 (FSRDNQLGEG…VVMLNANSFT (281 aa)) folds into the Protein kinase domain. Residues 350–358 (LGEGGFGAV) and lysine 372 each bind ATP. A Phosphotyrosine modification is found at tyrosine 417. Residue aspartate 469 is the Proton acceptor of the active site. Position 473 is a phosphoserine (serine 473). Threonine 511 bears the Phosphothreonine mark. Phosphotyrosine is present on tyrosine 519.

This sequence belongs to the protein kinase superfamily. Ser/Thr protein kinase family. CRK subfamily.

It localises to the membrane. The catalysed reaction is L-seryl-[protein] + ATP = O-phospho-L-seryl-[protein] + ADP + H(+). It catalyses the reaction L-threonyl-[protein] + ATP = O-phospho-L-threonyl-[protein] + ADP + H(+). This Arabidopsis thaliana (Mouse-ear cress) protein is Cysteine-rich receptor-like protein kinase 41 (CRK41).